Here is a 98-residue protein sequence, read N- to C-terminus: Aspartyl/glutamyl-tRNA(Asn/Gln) amidotransferase subunit C (98 aa).

Belongs to the GatC family. As to quaternary structure, heterotrimer of A, B and C subunits.

It catalyses the reaction L-glutamyl-tRNA(Gln) + L-glutamine + ATP + H2O = L-glutaminyl-tRNA(Gln) + L-glutamate + ADP + phosphate + H(+). It carries out the reaction L-aspartyl-tRNA(Asn) + L-glutamine + ATP + H2O = L-asparaginyl-tRNA(Asn) + L-glutamate + ADP + phosphate + 2 H(+). Allows the formation of correctly charged Asn-tRNA(Asn) or Gln-tRNA(Gln) through the transamidation of misacylated Asp-tRNA(Asn) or Glu-tRNA(Gln) in organisms which lack either or both of asparaginyl-tRNA or glutaminyl-tRNA synthetases. The reaction takes place in the presence of glutamine and ATP through an activated phospho-Asp-tRNA(Asn) or phospho-Glu-tRNA(Gln). In Acidothermus cellulolyticus (strain ATCC 43068 / DSM 8971 / 11B), this protein is Aspartyl/glutamyl-tRNA(Asn/Gln) amidotransferase subunit C.